Reading from the N-terminus, the 245-residue chain is UPF0246 protein Cgl1995/cg2186 (245 aa).

The protein belongs to the UPF0246 family.

This is UPF0246 protein Cgl1995/cg2186 from Corynebacterium glutamicum (strain ATCC 13032 / DSM 20300 / JCM 1318 / BCRC 11384 / CCUG 27702 / LMG 3730 / NBRC 12168 / NCIMB 10025 / NRRL B-2784 / 534).